Reading from the N-terminus, the 183-residue chain is Ferritin heavy chain (183 aa).

Residue M1 is modified to N-acetylmethionine. Position 2 is an N-acetylthreonine; in Ferritin heavy chain, N-terminally processed (T2). In terms of domain architecture, Ferritin-like diiron spans 11 to 160 (QNYHQDSEAA…DHVTNLRKMG (150 aa)). Positions 28, 63, 66, 108, and 142 each coordinate Fe cation. 2 positions are modified to phosphoserine: S179 and S183.

Belongs to the ferritin family. In terms of assembly, oligomer of 24 subunits. There are two types of subunits: L (light) chain and H (heavy) chain. The major chain can be light or heavy, depending on the species and tissue type. The functional molecule forms a roughly spherical shell with a diameter of 12 nm and contains a central cavity into which the insoluble mineral iron core is deposited. Interacts with NCOA4; NCOA4 promotes targeting of the iron-binding ferritin complex to autolysosomes following starvation or iron depletion.

It localises to the cytoplasm. The protein resides in the lysosome. Its subcellular location is the cytoplasmic vesicle. It is found in the autophagosome. The enzyme catalyses 4 Fe(2+) + O2 + 4 H(+) = 4 Fe(3+) + 2 H2O. Functionally, stores iron in a soluble, non-toxic, readily available form. Important for iron homeostasis. Has ferroxidase activity. Iron is taken up in the ferrous form and deposited as ferric hydroxides after oxidation. Also plays a role in delivery of iron to cells. Mediates iron uptake in capsule cells of the developing kidney. Delivery to lysosomes is mediated by the cargo receptor NCOA4 for autophagic degradation and release of iron. This Canis lupus familiaris (Dog) protein is Ferritin heavy chain (FTH1).